A 736-amino-acid polypeptide reads, in one-letter code: Na(+)/H(+) antiporter NhaA (736 aa).

A na(+)/H(+) antiporter NhaA region spans residues 1-387; the sequence is MNHSPQSARP…ICGYLLLRAA (387 aa). A run of 11 helical transmembrane segments spans residues 23 to 43, 58 to 78, 96 to 116, 126 to 146, 155 to 175, 178 to 198, 201 to 221, 265 to 285, 298 to 318, 334 to 354, and 367 to 387; these read AGGI…NSPF, LSLA…LVGL, MLPG…FAVL, GWAV…SLLG, VFLA…IAIF, AEIS…LFVM, MDVV…FFVF, VAFI…FKGL, ILLG…WLAI, LYGV…IGLL, and IGVL…LRAA. A peptidase S49 region spans residues 388–736; sequence RPDQSAANPL…EKAIWARYGL (349 aa).

The protein in the N-terminal section; belongs to the NhaA Na(+)/H(+) (TC 2.A.33) antiporter family. It in the C-terminal section; belongs to the peptidase S49 family.

It is found in the cell inner membrane. It catalyses the reaction Na(+)(in) + 2 H(+)(out) = Na(+)(out) + 2 H(+)(in). In terms of biological role, na(+)/H(+) antiporter that extrudes sodium in exchange for external protons. The protein is Na(+)/H(+) antiporter NhaA of Brucella melitensis biotype 1 (strain ATCC 23456 / CCUG 17765 / NCTC 10094 / 16M).